Reading from the N-terminus, the 121-residue chain is UPF0344 protein BC_1150 (121 aa).

4 consecutive transmembrane segments (helical) span residues 6 to 26 (ITAWALGLILFFVAYSLYSAG), 38 to 58 (LMYIIIIVTGFMLYMSIVKTA), 65 to 85 (WYGLKMLAGILVIGGMEMVLV), and 92 to 112 (PTGAVWGLFIVALVAVFYLGL).

This sequence belongs to the UPF0344 family.

It localises to the cell membrane. The protein is UPF0344 protein BC_1150 of Bacillus cereus (strain ATCC 14579 / DSM 31 / CCUG 7414 / JCM 2152 / NBRC 15305 / NCIMB 9373 / NCTC 2599 / NRRL B-3711).